We begin with the raw amino-acid sequence, 150 residues long: D-aminoacyl-tRNA deacylase (150 aa).

The short motif at Gly-138 to Pro-139 is the Gly-cisPro motif, important for rejection of L-amino acids element.

This sequence belongs to the DTD family. Homodimer.

It is found in the cytoplasm. It catalyses the reaction glycyl-tRNA(Ala) + H2O = tRNA(Ala) + glycine + H(+). The catalysed reaction is a D-aminoacyl-tRNA + H2O = a tRNA + a D-alpha-amino acid + H(+). Functionally, an aminoacyl-tRNA editing enzyme that deacylates mischarged D-aminoacyl-tRNAs. Also deacylates mischarged glycyl-tRNA(Ala), protecting cells against glycine mischarging by AlaRS. Acts via tRNA-based rather than protein-based catalysis; rejects L-amino acids rather than detecting D-amino acids in the active site. By recycling D-aminoacyl-tRNA to D-amino acids and free tRNA molecules, this enzyme counteracts the toxicity associated with the formation of D-aminoacyl-tRNA entities in vivo and helps enforce protein L-homochirality. The chain is D-aminoacyl-tRNA deacylase from Parabacteroides distasonis (strain ATCC 8503 / DSM 20701 / CIP 104284 / JCM 5825 / NCTC 11152).